The primary structure comprises 457 residues: Peptidyl-prolyl cis-trans isomerase FKBP5 (457 aa).

Met-1 is subject to N-acetylmethionine. Positions 1 to 11 (MTTDEGAKNSR) are enriched in basic and acidic residues. Positions 1 to 27 (MTTDEGAKNSRENPTATVAEQGEDVTS) are disordered. The residue at position 28 (Lys-28) is an N6-acetyllysine. 2 PPIase FKBP-type domains span residues 50 to 138 (GDKV…LDFK) and 165 to 251 (GARV…KSFE). TPR repeat units follow at residues 268 to 301 (AAIV…LEME), 317 to 350 (LAAF…DSAN), and 351 to 384 (EKGL…NPQN). A disordered region spans residues 423–457 (EEANKAMSKKTSEGVTNEKLAVSHAVEEEKPEGHV). A Phosphoserine modification is found at Ser-445. Positions 447–457 (AVEEEKPEGHV) are enriched in basic and acidic residues.

As to quaternary structure, part of a heteromultimeric cytoplasmic complex with HSP90AA1, HSPA1A/HSPA1B and steroid receptors. Upon ligand binding dissociates from the complex and FKBP4 takes its place. Interacts with functionally mature heterooligomeric progesterone receptor complexes along with HSP90 and TEBP. Interacts with NR3C1. Interacts with Akt/AKT1 and PHLPP1; enhancing dephosphorylation and subsequent activation of Akt/AKT1. Interacts with IFI44L; this interaction modulates the kinase activity of IKBKB and IKBKE. Interacts with IKBKB and IKBKE. Acetylation impairs ability to promote interaction between Akt/AKT1 and PHLPP1. Deacetylation by SIRT7 promotes interaction between Akt/AKT1 and PHLPP1, leading to suppress Akt/AKT1 activation. In terms of processing, ubiquitinated, leading to degradation in a proteasome-dependent manner. Deubiquitinated by USP49, leading to stabilization.

It localises to the cytoplasm. The protein resides in the nucleus. It catalyses the reaction [protein]-peptidylproline (omega=180) = [protein]-peptidylproline (omega=0). Its activity is regulated as follows. Inhibited by both FK506 and rapamycin. Immunophilin protein with PPIase and co-chaperone activities. Component of unligated steroid receptors heterocomplexes through interaction with heat-shock protein 90 (HSP90). Plays a role in the intracellular trafficking of heterooligomeric forms of steroid hormone receptors maintaining the complex into the cytoplasm when unliganded. Acts as a regulator of Akt/AKT1 activity by promoting the interaction between Akt/AKT1 and PHLPP1, thereby enhancing dephosphorylation and subsequent activation of Akt/AKT1. Interacts with IKBKE and IKBKB which facilitates IKK complex assembly leading to increased IKBKE and IKBKB kinase activity, NF-kappaB activation, and IFN production. The chain is Peptidyl-prolyl cis-trans isomerase FKBP5 (FKBP5) from Aotus nancymaae (Ma's night monkey).